Here is a 421-residue protein sequence, read N- to C-terminus: Transcription factor IIIB 50 kDa subunit (421 aa).

The TFIIB-type zinc-finger motif lies at 2 to 36 (PGRGRCPDCGSAELVEDSHYSQNQLVCSDCGCVVT). Residues Cys-7, Cys-10, Cys-28, and Cys-31 each coordinate Zn(2+). 2 consecutive repeat copies span residues 72–157 (GLRR…MQIV) and 173–249 (VKTY…SLAR). The interaction with target DNA stretch occupies residues 108 to 114 (TARLQKK). Residues 325-357 (ELQGQGQGQGLGDEDVGSSSLELPAGKRPSSPA) form a disordered region. Ser-355 is subject to Phosphoserine. Residues 359-365 (LLPPCML) form a required for the formation of a ternary complex with DNA and TBP; not required for interaction with TBP in the absence of DNA region. Cys-363 carries the post-translational modification Cysteine sulfenic acid (-SOH). The interval 367-421 (PPKRVCPAPPVSMVTGDEDISDSEIEQYLRTPQEVRDFQKAQAARQAAQGTPNPP) is required for interaction with TBP and formation of a ternary complex with DNA and TBP.

It belongs to the TFIIB family. As to quaternary structure, component of TFIIIB complexes. The TFIIIB complex has two activities, alpha and beta. The TFIIIB-alpha activity complex is composed of TBP, BDP1, and a complex containing both BRF2 and at least four stably associated proteins; this complex inhibits the transcription by pol III via its phosphorylation by CK2; YY1 facilitates the TFIIIB-alpha complex formation. Interacts with TBP; this interaction promotes recruitment of BRF2 to TATA box-containing promoters. Interacts with TBP and the BURE sequence (GC-rich sequence downstream from the TATA box) to form a strong ternary complex which is joined by BDP1; this ternary complex stimulates pol III transcription. Forms a trimeric complex composed of TBP, BRF2 and mini-SNAPc complex (SNAP43, SNAP50, and the N-terminal third of SNAP190) on the promoter. Assembly of the TBP-BRF2 complex is stimulated by SNAP190. Interacts with MAF1 and SNAPC4. In response to oxidative stress, Cys-363 is reversibly oxidized to cysteine sulfenic acid. Oxidation of Cys-363 impairs formation of a ternary complex with TBP and DNA and down-regulates expression of target genes in response to oxidative stress.

It localises to the nucleus. Functionally, general activator of RNA polymerase III transcription. Factor exclusively required for RNA polymerase III transcription of genes with promoter elements upstream of the initiation sites. Contributes to the regulation of gene expression; functions as activator in the absence of oxidative stress. Down-regulates expression of target genes in response to oxidative stress. Overexpression protects cells against apoptosis in response to oxidative stress. This Bos taurus (Bovine) protein is Transcription factor IIIB 50 kDa subunit (BRF2).